Consider the following 389-residue polypeptide: Succinate--CoA ligase [ADP-forming] subunit beta (389 aa).

One can recognise an ATP-grasp domain in the interval 9–236 (RDMFEAHGVP…KDAADPLEAK (228 aa)). Residues Lys-45, 52–54 (GRG), Ala-94, and Glu-99 each bind ATP. Mg(2+) contacts are provided by Asn-191 and Asp-205. Residues Asn-256 and 318–320 (GIT) each bind substrate.

This sequence belongs to the succinate/malate CoA ligase beta subunit family. Heterotetramer of two alpha and two beta subunits. It depends on Mg(2+) as a cofactor.

The enzyme catalyses succinate + ATP + CoA = succinyl-CoA + ADP + phosphate. The catalysed reaction is GTP + succinate + CoA = succinyl-CoA + GDP + phosphate. It participates in carbohydrate metabolism; tricarboxylic acid cycle; succinate from succinyl-CoA (ligase route): step 1/1. Its function is as follows. Succinyl-CoA synthetase functions in the citric acid cycle (TCA), coupling the hydrolysis of succinyl-CoA to the synthesis of either ATP or GTP and thus represents the only step of substrate-level phosphorylation in the TCA. The beta subunit provides nucleotide specificity of the enzyme and binds the substrate succinate, while the binding sites for coenzyme A and phosphate are found in the alpha subunit. In Paenarthrobacter aurescens (strain TC1), this protein is Succinate--CoA ligase [ADP-forming] subunit beta.